The primary structure comprises 255 residues: Postacrosomal sheath WW domain-binding protein (255 aa).

The GRAM domain occupies 15-87 (LIPNGESLLK…DLITNLTVEQ (73 aa)). Repeat copies occupy residues 139-145 (YGAPPAG), 146-152 (YGAPPAG), 153-159 (YGAPPPG), 160-166 (YGAPPAG), 167-173 (YGAPPPG), 174-180 (YGAPPAG), and 202-208 (YGAPPLG). Positions 139-208 (YGAPPAGYGA…PAGYGAPPLG (70 aa)) are 6 X 7 AA tandem repeat of Y-G-X-P-P-X-G. Residues 171–174 (PPGY) carry the PPxY motif motif. 2 disordered regions span residues 180 to 199 (GYGA…RASP) and 204 to 255 (APPL…ASSS).

In terms of biological role, may play a role in meiotic resumption and pronuclear formation, mediated by a WW domain-signaling pathway during fertilization. This Macaca fascicularis (Crab-eating macaque) protein is Postacrosomal sheath WW domain-binding protein (WBP2NL).